The following is a 371-amino-acid chain: Queuine tRNA-ribosyltransferase (371 aa).

Asp-93 (proton acceptor) is an active-site residue. Residues 93–97 (DSGGF), Asp-147, Gln-191, and Gly-218 contribute to the substrate site. The RNA binding stretch occupies residues 249 to 255 (GVGTVVD). Asp-268 functions as the Nucleophile in the catalytic mechanism. An RNA binding; important for wobble base 34 recognition region spans residues 273–277 (TRNAR). Residues Cys-306, Cys-308, Cys-311, and His-337 each contribute to the Zn(2+) site.

Belongs to the queuine tRNA-ribosyltransferase family. In terms of assembly, homodimer. Within each dimer, one monomer is responsible for RNA recognition and catalysis, while the other monomer binds to the replacement base PreQ1. The cofactor is Zn(2+).

It catalyses the reaction 7-aminomethyl-7-carbaguanine + guanosine(34) in tRNA = 7-aminomethyl-7-carbaguanosine(34) in tRNA + guanine. It functions in the pathway tRNA modification; tRNA-queuosine biosynthesis. Functionally, catalyzes the base-exchange of a guanine (G) residue with the queuine precursor 7-aminomethyl-7-deazaguanine (PreQ1) at position 34 (anticodon wobble position) in tRNAs with GU(N) anticodons (tRNA-Asp, -Asn, -His and -Tyr). Catalysis occurs through a double-displacement mechanism. The nucleophile active site attacks the C1' of nucleotide 34 to detach the guanine base from the RNA, forming a covalent enzyme-RNA intermediate. The proton acceptor active site deprotonates the incoming PreQ1, allowing a nucleophilic attack on the C1' of the ribose to form the product. After dissociation, two additional enzymatic reactions on the tRNA convert PreQ1 to queuine (Q), resulting in the hypermodified nucleoside queuosine (7-(((4,5-cis-dihydroxy-2-cyclopenten-1-yl)amino)methyl)-7-deazaguanosine). The sequence is that of Queuine tRNA-ribosyltransferase from Leptospira biflexa serovar Patoc (strain Patoc 1 / Ames).